A 57-amino-acid chain; its full sequence is Small ribosomal subunit protein eS27 (57 aa).

Zn(2+) is bound by residues cysteine 10, cysteine 13, cysteine 29, and cysteine 32. A C4-type zinc finger spans residues 10–32; it reads CDDCENEQVLFGKAANTVNCAVC.

It belongs to the eukaryotic ribosomal protein eS27 family. In terms of assembly, part of the 30S ribosomal subunit. The cofactor is Zn(2+).

The chain is Small ribosomal subunit protein eS27 from Natronomonas pharaonis (strain ATCC 35678 / DSM 2160 / CIP 103997 / JCM 8858 / NBRC 14720 / NCIMB 2260 / Gabara) (Halobacterium pharaonis).